Reading from the N-terminus, the 286-residue chain is tRNA (guanine-N(7)-)-methyltransferase (286 aa).

The disordered stretch occupies residues 1–21 (MTNPESTAIDPVAAMGTDHTE). S-adenosyl-L-methionine contacts are provided by Glu91, Glu116, Asn143, and Asp165. Asp165 is an active-site residue. Substrate-binding positions include Lys169, Asp201, and 262-265 (TNFE).

The protein belongs to the class I-like SAM-binding methyltransferase superfamily. TrmB family.

It carries out the reaction guanosine(46) in tRNA + S-adenosyl-L-methionine = N(7)-methylguanosine(46) in tRNA + S-adenosyl-L-homocysteine. It participates in tRNA modification; N(7)-methylguanine-tRNA biosynthesis. In terms of biological role, catalyzes the formation of N(7)-methylguanine at position 46 (m7G46) in tRNA. The chain is tRNA (guanine-N(7)-)-methyltransferase from Bifidobacterium longum (strain NCC 2705).